The sequence spans 1305 residues: Junctional cadherin 5-associated protein (1305 aa).

Disordered regions lie at residues 13–86, 120–151, 249–419, 450–545, 575–604, 616–795, and 818–1005; these read YKLS…PSTA, REQE…VGGR, GVPK…HTTA, KLDG…CEMQ, IPVK…EQSV, ALTG…SRQL, and FNKE…GLSA. 4 stretches are compositionally biased toward basic and acidic residues: residues 21–31, 69–82, 120–129, and 140–151; these read APHEDDGERRQ, PESR…HGER, REQEAREDPG, and HPREGPWEVGGR. Over residues 337–358 the composition is skewed to pro residues; that stretch reads GLEPPVYVPPPSYKSPPQPAAH. Residues 360–369 are compositionally biased toward basic and acidic residues; the sequence is CPEEAVSRHE. Polar residues-rich tracts occupy residues 530–545 and 579–594; these read LVSS…CEMQ and SESQ…NDLK. A compositionally biased stretch (low complexity) spans 595–604; it reads QSASLQEQSV. Residues 669 to 683 are compositionally biased toward polar residues; sequence QQTQTSFAHEPQSLQ. Positions 729-748 are enriched in low complexity; the sequence is SPKSQGSLSPSSNSAFSGSS. Position 841 is a phosphoserine (S841). Composition is skewed to basic and acidic residues over residues 878-889 and 945-958; these read SKSESWSEEGRP and AKPE…EQRE. Phosphoserine is present on residues S1004, S1010, S1152, and S1239. Disordered regions lie at residues 1062–1166 and 1234–1305; these read GAQR…DVET and SRAA…VERV. The span at 1276 to 1288 shows a compositional bias: basic and acidic residues; sequence ADGHPAARRENGG.

The protein resides in the cell junction. Its subcellular location is the adherens junction. The chain is Junctional cadherin 5-associated protein (JCAD) from Bos taurus (Bovine).